We begin with the raw amino-acid sequence, 181 residues long: Histone deacetylase complex subunit SAP30L (181 aa).

An Atypical zinc finger spans residues 26 to 74 (CCLIDGGERCPRPAGNASFSKRVQKSISQKKLKLDIDKSVRHLYICDFH). The tract at residues 82-103 (RNKRKRKTSDDGGDSPEHETDV) is disordered. Residues 83–88 (NKRKRK) carry the Nuclear localization signal (NLS) motif. Residues 85–87 (RKR) are important for DNA and phosphoinositide binding.

The protein belongs to the SAP30 family. Interacts with components of the histone deacetylase complex sin3a, hdac1 and hdac2. Binds histones and nucleosomes.

It localises to the nucleus. It is found in the nucleolus. Functions as a transcription repressor, probably via its interaction with histone deacetylase complexes. Involved in the functional recruitment of the class 1 Sin3-histone deacetylase complex (HDAC) to the nucleolus. Binds DNA, apparently without sequence-specificity, and bends bound double-stranded DNA. Binds phosphoinositol phosphates (phosphoinositol 3-phosphate, phosphoinositol 4-phosphate and phosphoinositol 5-phosphate) via the same basic sequence motif that mediates DNA binding and nuclear import. This is Histone deacetylase complex subunit SAP30L (sap30l) from Xenopus tropicalis (Western clawed frog).